The chain runs to 206 residues: Somatotropin (206 aa).

The first 22 residues, 1-22, serve as a signal peptide directing secretion; the sequence is MAGLHFFPALLALLMASLQTHQ. Cystine bridges form between Cys-75/Cys-179 and Cys-196/Cys-204.

The protein belongs to the somatotropin/prolactin family.

The protein localises to the secreted. Functionally, growth hormone plays an important role in growth control and is involved in the regulation of several anabolic processes. Implicated as an osmoregulatory substance important for seawater adaptation. The sequence is that of Somatotropin (gh) from Protopterus annectens (African lungfish).